Reading from the N-terminus, the 63-residue chain is Kappa-theraphotoxin-Gr3a (63 aa).

The first 21 residues, 1-21 (MKTSVFVLVLGLVLLFAVSFA), serve as a signal peptide directing secretion. Residues 22–29 (TEMEESAR) constitute a propeptide that is removed on maturation. 3 disulfides stabilise this stretch: Cys-31–Cys-45, Cys-38–Cys-50, and Cys-44–Cys-57.

Belongs to the neurotoxin 10 (Hwtx-1) family. 63 (VsTx1) subfamily. As to expression, expressed by the venom gland.

The protein localises to the secreted. Functionally, inhibits sodium channels Nav1.7/SCN9A and potassium channels Kv11.1/KCNH2. Also binds the voltage-sensor domain of the potassium channel KvAP (from the archaeon Aeropyrum pernix) with very slow apparent binding kinetics and affects channel gating. Reaches its target by dynamically partitioning into anionic or zwitterionic headgroup lipid membranes. May bind to the open state of KvAP. The protein is Kappa-theraphotoxin-Gr3a of Grammostola rosea (Chilean rose tarantula).